The sequence spans 379 residues: Queuine tRNA-ribosyltransferase (379 aa).

Aspartate 94 acts as the Proton acceptor in catalysis. Substrate contacts are provided by residues 94–98 (DSGGF), aspartate 148, glutamine 191, and glycine 218. The tract at residues 249 to 255 (GVGSPDA) is RNA binding. Catalysis depends on aspartate 268, which acts as the Nucleophile. Residues 273 to 277 (TRIAR) form an RNA binding; important for wobble base 34 recognition region. Cysteine 306, cysteine 308, cysteine 311, and histidine 337 together coordinate Zn(2+).

This sequence belongs to the queuine tRNA-ribosyltransferase family. Homodimer. Within each dimer, one monomer is responsible for RNA recognition and catalysis, while the other monomer binds to the replacement base PreQ1. Zn(2+) serves as cofactor.

It carries out the reaction 7-aminomethyl-7-carbaguanine + guanosine(34) in tRNA = 7-aminomethyl-7-carbaguanosine(34) in tRNA + guanine. The protein operates within tRNA modification; tRNA-queuosine biosynthesis. Catalyzes the base-exchange of a guanine (G) residue with the queuine precursor 7-aminomethyl-7-deazaguanine (PreQ1) at position 34 (anticodon wobble position) in tRNAs with GU(N) anticodons (tRNA-Asp, -Asn, -His and -Tyr). Catalysis occurs through a double-displacement mechanism. The nucleophile active site attacks the C1' of nucleotide 34 to detach the guanine base from the RNA, forming a covalent enzyme-RNA intermediate. The proton acceptor active site deprotonates the incoming PreQ1, allowing a nucleophilic attack on the C1' of the ribose to form the product. After dissociation, two additional enzymatic reactions on the tRNA convert PreQ1 to queuine (Q), resulting in the hypermodified nucleoside queuosine (7-(((4,5-cis-dihydroxy-2-cyclopenten-1-yl)amino)methyl)-7-deazaguanosine). The sequence is that of Queuine tRNA-ribosyltransferase from Staphylococcus aureus (strain Mu3 / ATCC 700698).